The following is a 388-amino-acid chain: Flap endonuclease 1 (388 aa).

The tract at residues 1–104 (MGILGLSKLI…GELAKRAERR (104 aa)) is N-domain. Asp-34 is a binding site for Mg(2+). The DNA site is built by Arg-47 and Arg-70. The Mg(2+) site is built by Asp-86, Glu-158, Glu-160, Asp-179, and Asp-181. The interval 122 to 253 (EIEKFNRRLV…KRAIELINNY (132 aa)) is I-domain. Glu-158 is a DNA binding site. DNA contacts are provided by Gly-231 and Asp-233. Residue Asp-233 coordinates Mg(2+). The interval 336–344 (TQVRLDSFF) is interaction with PCNA. The segment at 343-388 (FFKTLPSTPSATNAAKRKAEEAKKSANNKKAKTSGGGGGGRGRRPK) is disordered.

This sequence belongs to the XPG/RAD2 endonuclease family. FEN1 subfamily. In terms of assembly, interacts with PCNA. Three molecules of FEN1 bind to one PCNA trimer with each molecule binding to one PCNA monomer. PCNA stimulates the nuclease activity without altering cleavage specificity. Mg(2+) serves as cofactor. In terms of processing, phosphorylated. Phosphorylation upon DNA damage induces relocalization to the nuclear plasma.

It is found in the nucleus. Its subcellular location is the nucleolus. It localises to the nucleoplasm. The protein localises to the mitochondrion. Functionally, structure-specific nuclease with 5'-flap endonuclease and 5'-3' exonuclease activities involved in DNA replication and repair. During DNA replication, cleaves the 5'-overhanging flap structure that is generated by displacement synthesis when DNA polymerase encounters the 5'-end of a downstream Okazaki fragment. It enters the flap from the 5'-end and then tracks to cleave the flap base, leaving a nick for ligation. Also involved in the long patch base excision repair (LP-BER) pathway, by cleaving within the apurinic/apyrimidinic (AP) site-terminated flap. Acts as a genome stabilization factor that prevents flaps from equilibrating into structures that lead to duplications and deletions. Also possesses 5'-3' exonuclease activity on nicked or gapped double-stranded DNA, and exhibits RNase H activity. Also involved in replication and repair of rDNA and in repairing mitochondrial DNA. The protein is Flap endonuclease 1 of Drosophila ananassae (Fruit fly).